The chain runs to 114 residues: Integration host factor subunit alpha (114 aa).

This sequence belongs to the bacterial histone-like protein family. In terms of assembly, heterodimer of an alpha and a beta chain.

In terms of biological role, this protein is one of the two subunits of integration host factor, a specific DNA-binding protein that functions in genetic recombination as well as in transcriptional and translational control. This is Integration host factor subunit alpha from Afipia carboxidovorans (strain ATCC 49405 / DSM 1227 / KCTC 32145 / OM5) (Oligotropha carboxidovorans).